The chain runs to 536 residues: Phosphoenolpyruvate carboxykinase (ATP) (536 aa).

Substrate-binding residues include arginine 61, tyrosine 195, and lysine 201. ATP is bound by residues lysine 201, histidine 220, and 236–244 (GLSGTGKTT). Mn(2+) contacts are provided by lysine 201 and histidine 220. Aspartate 257 contributes to the Mn(2+) binding site. 3 residues coordinate ATP: glutamate 285, arginine 322, and threonine 447. Arginine 322 contacts substrate.

It belongs to the phosphoenolpyruvate carboxykinase (ATP) family. Requires Mn(2+) as cofactor.

The protein localises to the cytoplasm. It catalyses the reaction oxaloacetate + ATP = phosphoenolpyruvate + ADP + CO2. It functions in the pathway carbohydrate biosynthesis; gluconeogenesis. In terms of biological role, involved in the gluconeogenesis. Catalyzes the conversion of oxaloacetate (OAA) to phosphoenolpyruvate (PEP) through direct phosphoryl transfer between the nucleoside triphosphate and OAA. This is Phosphoenolpyruvate carboxykinase (ATP) from Rhizobium johnstonii (strain DSM 114642 / LMG 32736 / 3841) (Rhizobium leguminosarum bv. viciae).